A 164-amino-acid polypeptide reads, in one-letter code: Crossover junction endodeoxyribonuclease RuvC (164 aa).

Residues aspartate 7, glutamate 67, and aspartate 139 contribute to the active site. Mg(2+) is bound by residues aspartate 7, glutamate 67, and aspartate 139.

This sequence belongs to the RuvC family. As to quaternary structure, homodimer which binds Holliday junction (HJ) DNA. The HJ becomes 2-fold symmetrical on binding to RuvC with unstacked arms; it has a different conformation from HJ DNA in complex with RuvA. In the full resolvosome a probable DNA-RuvA(4)-RuvB(12)-RuvC(2) complex forms which resolves the HJ. It depends on Mg(2+) as a cofactor.

It is found in the cytoplasm. The enzyme catalyses Endonucleolytic cleavage at a junction such as a reciprocal single-stranded crossover between two homologous DNA duplexes (Holliday junction).. The RuvA-RuvB-RuvC complex processes Holliday junction (HJ) DNA during genetic recombination and DNA repair. Endonuclease that resolves HJ intermediates. Cleaves cruciform DNA by making single-stranded nicks across the HJ at symmetrical positions within the homologous arms, yielding a 5'-phosphate and a 3'-hydroxyl group; requires a central core of homology in the junction. The consensus cleavage sequence is 5'-(A/T)TT(C/G)-3'. Cleavage occurs on the 3'-side of the TT dinucleotide at the point of strand exchange. HJ branch migration catalyzed by RuvA-RuvB allows RuvC to scan DNA until it finds its consensus sequence, where it cleaves and resolves the cruciform DNA. In Citrifermentans bemidjiense (strain ATCC BAA-1014 / DSM 16622 / JCM 12645 / Bem) (Geobacter bemidjiensis), this protein is Crossover junction endodeoxyribonuclease RuvC.